Reading from the N-terminus, the 399-residue chain is Bombesin receptor subtype-3 (399 aa).

Over 1-41 (MSQRQSQSPNQTLISITNDTETSSSVVSNDTTHKGWTGDNS) the chain is Extracellular. N-linked (GlcNAc...) asparagine glycans are attached at residues Asn-10, Asn-18, and Asn-29. The helical transmembrane segment at 42 to 63 (PGIEALCAIYITYAGIISVGIL) threads the bilayer. Topologically, residues 64–82 (GNAILIKVFFKTKSMQTVP) are cytoplasmic. A helical membrane pass occupies residues 83–103 (NIFITSLAFGDLLLLLTCVPV). Residues 104-121 (DATHYLAEGWLFGKVGCK) lie on the Extracellular side of the membrane. Cys-120 and Cys-203 are oxidised to a cystine. A helical membrane pass occupies residues 122-143 (VLSFIRLTSVGVSVFTLTILSA). Topologically, residues 144 to 163 (DRYKAVVKPLERQPPNAILK) are cytoplasmic. The helical transmembrane segment at 164–184 (TCAKAGGIWIVSMIFALPEAI) threads the bilayer. At 185–220 (FSNVYTFQDPNRNVTFESCNSYPISERLLQEIHSLL) the chain is on the extracellular side. The chain crosses the membrane as a helical span at residues 221–241 (CFLVFYIIPLSIISVYYSLIA). Over 242-272 (RTLYKSTLNIPTEEQSHARKQIESRKRIAKT) the chain is Cytoplasmic. Residues 273–293 (VLVLVALFALCWLPNHLLYLY) traverse the membrane as a helical segment. The Extracellular segment spans residues 294–313 (HSFTYESYANHSDVPFVIII). The chain crosses the membrane as a helical span at residues 314-333 (FSRVLAFSNSCVNPFALYWL). The Cytoplasmic portion of the chain corresponds to 334–399 (SKTFQQHFKA…SSAKKGEDKV (66 aa)). Cys-347 carries the S-palmitoyl cysteine lipid modification.

It belongs to the G-protein coupled receptor 1 family. Interacts with C6orf89.

The protein resides in the cell membrane. Role in sperm cell division, maturation, or function. This receptor mediates its action by association with G proteins that activate a phosphatidylinositol-calcium second messenger system. This Mus musculus (Mouse) protein is Bombesin receptor subtype-3 (Brs3).